A 208-amino-acid polypeptide reads, in one-letter code: Ribosomal RNA large subunit methyltransferase E (208 aa).

5 residues coordinate S-adenosyl-L-methionine: G62, W64, D82, D98, and D123. K163 serves as the catalytic Proton acceptor.

This sequence belongs to the class I-like SAM-binding methyltransferase superfamily. RNA methyltransferase RlmE family.

It is found in the cytoplasm. The enzyme catalyses uridine(2552) in 23S rRNA + S-adenosyl-L-methionine = 2'-O-methyluridine(2552) in 23S rRNA + S-adenosyl-L-homocysteine + H(+). Specifically methylates the uridine in position 2552 of 23S rRNA at the 2'-O position of the ribose in the fully assembled 50S ribosomal subunit. This Idiomarina loihiensis (strain ATCC BAA-735 / DSM 15497 / L2-TR) protein is Ribosomal RNA large subunit methyltransferase E.